The chain runs to 665 residues: Methionine--tRNA ligase (665 aa).

A 'HIGH' region motif is present at residues 12–22 (YYPSGKLHIGS). The short motif at 308–312 (KMSKS) is the 'KMSKS' region element. An ATP-binding site is contributed by K311. One can recognise a tRNA-binding domain in the interval 562-665 (TFDAVEIRVA…SSVPNGSIIG (104 aa)).

The protein belongs to the class-I aminoacyl-tRNA synthetase family. MetG type 2B subfamily. In terms of assembly, homodimer.

It is found in the cytoplasm. It catalyses the reaction tRNA(Met) + L-methionine + ATP = L-methionyl-tRNA(Met) + AMP + diphosphate. Functionally, is required not only for elongation of protein synthesis but also for the initiation of all mRNA translation through initiator tRNA(fMet) aminoacylation. The protein is Methionine--tRNA ligase (metG) of Streptococcus pyogenes serotype M18 (strain MGAS8232).